The sequence spans 81 residues: MSHAVKIYDTCIGCTQCVRACPLDVLEMVPWDGCKAGQIASSPRTEDCVGCKRCETACPTDFLSIRVYLGDETSRSMGLAY.

4Fe-4S ferredoxin-type domains lie at 2–31 and 37–68; these read SHAVKIYDTCIGCTQCVRACPLDVLEMVPW and GQIASSPRTEDCVGCKRCETACPTDFLSIRVY. The [4Fe-4S] cluster site is built by cysteine 11, cysteine 14, cysteine 17, cysteine 21, cysteine 48, cysteine 51, cysteine 54, and cysteine 58.

In terms of assembly, the cyanobacterial PSI reaction center is composed of one copy each of PsaA,B,C,D,E,F,I,J,K,L,M and X, and forms trimeric complexes. [4Fe-4S] cluster is required as a cofactor.

The protein resides in the cellular thylakoid membrane. It catalyses the reaction reduced [plastocyanin] + hnu + oxidized [2Fe-2S]-[ferredoxin] = oxidized [plastocyanin] + reduced [2Fe-2S]-[ferredoxin]. Functionally, apoprotein for the two 4Fe-4S centers FA and FB of photosystem I (PSI); essential for photochemical activity. FB is the terminal electron acceptor of PSI, donating electrons to ferredoxin. The C-terminus interacts with PsaA/B/D and helps assemble the protein into the PSI complex. Required for binding of PsaD and PsaE to PSI. PSI is a plastocyanin/cytochrome c6-ferredoxin oxidoreductase, converting photonic excitation into a charge separation, which transfers an electron from the donor P700 chlorophyll pair to the spectroscopically characterized acceptors A0, A1, FX, FA and FB in turn. The chain is Photosystem I iron-sulfur center from Prochlorococcus marinus subsp. pastoris (strain CCMP1986 / NIES-2087 / MED4).